A 3289-amino-acid polypeptide reads, in one-letter code: tRNA nuclease CdiA (3289 aa).

Residues 1-32 (MHQPPVRFTYRLLSYLISTIIAGQPLLPAVGA) form the signal peptide. The two-partner system transport domain (TPS) stretch occupies residues 36-322 (PQNGAGMDKA…AGGNLSVSSR (287 aa)). The interval 351-1398 (EKLTAGRDVT…IVVRTGHLLN (1048 aa)) is FHA-1. Residues 595 to 615 (AVNASEKLTHSGKSSAPSLSL) form a disordered region. The tract at residues 1399–1689 (QREGFSATTT…LTGQTGISDD (291 aa)) is receptor binding domain (RBD). Residues 1690 to 1874 (WPLPSGNNGY…LSPEDITLHN (185 aa)) are YP domain. The interval 1875–1935 (GSVISGNNVQ…DLSAIGDISN (61 aa)) is periplasmic FHA-1 repeat (pFR). Residues 1979-2653 (TDTGPVATIK…TSKYDSKQTS (675 aa)) are FHA-2. Residues 2097–2113 (RESKNSRNGRSESHESH) show a composition bias toward basic and acidic residues. Disordered stretches follow at residues 2097-2116 (RESK…HAAV), 2332-2356 (GSSK…TIGS), and 2466-2513 (TGDP…TGKN). Composition is skewed to polar residues over residues 2344–2356 (GTTQ…TIGS) and 2472–2507 (TGVS…NLSV). The interval 2992 to 3034 (SDLSEEQKQTISTLATVSAGLAGGLTGNSTASAAVGAQSGKNA) is pretoxin (PT) domain. The VENN CT cleavage motif motif lies at 3035-3038 (VENN). Residues 3035 to 3289 (VENNYLSVSE…VGHIQPVKVK (255 aa)) form a C-terminal effector domain (CT); has tRNase activity region. Positions 3039–3197 (YLSVSEKTEL…PLIGQAASNK (159 aa)) are inner membrane translocation domain (IMTD), targets protein to PtsG.

This sequence in the N-terminal section; belongs to the CdiA toxin family. As to quaternary structure, forms a contact-dependent growth inhibition complex of CdiA-CT-NC101, CdiI-NC101 and EF-Tu; the complex is a dimer of heterotrimers. Stable CdiA-CT-NC101, EF-Tu complexes are not detected, nor are complexes with EF-Ts.

Its subcellular location is the secreted. It localises to the target cell. The protein resides in the target cell cytoplasm. Toxic component of a toxin-immunity protein module, which functions as a cellular contact-dependent growth inhibition (CDI) system. CDI modules allow bacteria to communicate with and inhibit the growth of closely related neighboring bacteria in a contact-dependent fashion (target cell counts decrease about 10,0000-fold for this system). CdiA toxicity is neutralized by its cognate immunity protein CdiI-NC101, but not by CdiI from other bacteria. The C-terminal domain (CT) cleaves tRNA endonucleolytically at the 5' side of guanine discriminator nucleotide sites (removes the last 4 nucleotides of the tRNA acceptor arm when the first nucleotide to be removed is G). Requires EF-Ts (tsf) for toxic function of the CT domain in vivo. In vitro the CT tRNase activity requires both EF-Tu (tufA) and EF-Ts. EF-Ts probably increases steady-state GTP-EF-Tu-aa-tRNA substrate levels. The CT domain is thought to remodel this same complex to displace the 3'-end of the aa-tRNA and allow it to enter into the toxin active site. The CT domain gains access to the cytoplasm of target cells by using integral inner membrane protein PTS system glucose-specific EIICB component (ptsG). Its function is as follows. The CdiA protein is thought to be exported from the cell through the central lumen of CdiB, the other half of its two-partner system (TPS). The TPS domain probably remains associated with CdiB while the FHA-1 domain forms an extended filament with the receptor-binding domain (RBD) at its extremity; in the secretion arrested state the C-terminus of the RBD and YP domains form a hairpin-like structure as the FHA-2, PT and CT domains are periplasmic. The YP domain is probably responsible for this arrest at the point where it re-enters the host cell periplasm. Upon binding to a target cell outer membrane receptor a signal is transmitted to activate secretion. The filament elongates slightly, the rest of CdiA is secreted and the FHA-2 domain becomes stably associated with the target cell's outer membrane where it facilitates entry of the toxic CT domain into the target cell periplasm. From there the toxic CT domain is cleaved and gains access to the target cell cytoplasm via an inner membrane protein (PtsG for this CDI). The sequence is that of tRNA nuclease CdiA from Escherichia coli (strain NC101).